The primary structure comprises 420 residues: Protein STB1 (420 aa).

N-acetylserine is present on S2. The interval 2 to 70 (SQPQMSPEKE…DEDHKTLLEA (69 aa)) is interaction with SWI6. S7 bears the Phosphoserine mark. Disordered regions lie at residues 30 to 187 (QLKL…SDNT) and 273 to 319 (DSPS…ELNG). A compositionally biased stretch (basic and acidic residues) spans 43-55 (RKQDSTTKKRSGE). Phosphoserine is present on S72. T99 carries the post-translational modification Phosphothreonine. The residue at position 102 (S102) is a Phosphoserine. Over residues 106-122 (RKAEDRSQQIKPRKEDT) the composition is skewed to basic and acidic residues. Over residues 156-169 (NNNNSSNHSNNNNN) the composition is skewed to low complexity. Positions 277-319 (LYLSNNNGSVQATLSPQQRRKPTTNTLHPPSNVPTTPSRELNG) are enriched in polar residues. T419 carries the post-translational modification Phosphothreonine.

In terms of assembly, interacts with the ANK repeats of SWI6. The interaction with SWI6 is required for function. Interacts with SIN3. Post-translationally, phosphorylated by CDC28 in a cell cycle-dependent manner, inhibiting the interaction with SWI6.

The protein resides in the cytoplasm. The protein localises to the nucleus. Its function is as follows. Involved in the regulation and timing of MBF-dependent transcription in late G1 of the cell cycle. This chain is Protein STB1 (STB1), found in Saccharomyces cerevisiae (strain ATCC 204508 / S288c) (Baker's yeast).